The following is a 96-amino-acid chain: Co-chaperonin GroES (96 aa).

This sequence belongs to the GroES chaperonin family. In terms of assembly, heptamer of 7 subunits arranged in a ring. Interacts with the chaperonin GroEL.

It localises to the cytoplasm. In terms of biological role, together with the chaperonin GroEL, plays an essential role in assisting protein folding. The GroEL-GroES system forms a nano-cage that allows encapsulation of the non-native substrate proteins and provides a physical environment optimized to promote and accelerate protein folding. GroES binds to the apical surface of the GroEL ring, thereby capping the opening of the GroEL channel. This Vibrio atlanticus (strain LGP32) (Vibrio splendidus (strain Mel32)) protein is Co-chaperonin GroES.